Reading from the N-terminus, the 231-residue chain is Regulatory protein VanR (231 aa).

The region spanning 4-117 (KILIVDDEHE…ELIARVKAQL (114 aa)) is the Response regulatory domain. D53 carries the 4-aspartylphosphate modification. The segment at residues 131–231 (ENVIVHSGLV…VWGVGYKIEK (101 aa)) is a DNA-binding region (ompR/PhoB-type).

As to quaternary structure, monomer. In terms of processing, phosphorylated by VanS. Dephosphorylated by VanS. Can be phosphorylated nonenzymatically by acetyl-phosphate.

It is found in the cytoplasm. Functionally, member of the two-component regulatory system VanS/VanR. Binds to the promoter regions of target genes, including vanH and vanR; phosphorylation of VanR increases binding affinity to the vanH and vanR promoters significantly. DNA binding may be inhibited by the cognate sensor protein, VanS. Activates the transcription of vanH, vanA and vanX in response to vancomycin which results in vancomycin resistance. Involved in conferring vancomycin resistance. This is Regulatory protein VanR (vanR) from Enterococcus faecium (Streptococcus faecium).